We begin with the raw amino-acid sequence, 502 residues long: Glycogen synthase (502 aa).

K24 is an ADP-alpha-D-glucose binding site.

The protein belongs to the glycosyltransferase 1 family. Bacterial/plant glycogen synthase subfamily.

The catalysed reaction is [(1-&gt;4)-alpha-D-glucosyl](n) + ADP-alpha-D-glucose = [(1-&gt;4)-alpha-D-glucosyl](n+1) + ADP + H(+). The protein operates within glycan biosynthesis; glycogen biosynthesis. Synthesizes alpha-1,4-glucan chains using ADP-glucose. The chain is Glycogen synthase from Nitrosomonas eutropha (strain DSM 101675 / C91 / Nm57).